A 473-amino-acid chain; its full sequence is Photosystem II CP43 reaction center protein (473 aa).

Residues 1–14 (MKTLYSLRRFYHVE) constitute a propeptide that is removed on maturation. The residue at position 15 (Thr15) is an N-acetylthreonine. The residue at position 15 (Thr15) is a Phosphothreonine. Transmembrane regions (helical) follow at residues 69-93 (LFEV…PHLA), 134-155 (LIGP…RDKN), 178-200 (KAIY…RIID), 255-275 (KPFA…LSYS), and 291-312 (WYNN…ASQS). Position 367 (Glu367) interacts with [CaMn4O5] cluster. The chain crosses the membrane as a helical span at residues 447–471 (RARAAAAGFEKGINRENEPVLTLRP).

Belongs to the PsbB/PsbC family. PsbC subfamily. In terms of assembly, PSII is composed of 1 copy each of membrane proteins PsbA, PsbB, PsbC, PsbD, PsbE, PsbF, PsbH, PsbI, PsbJ, PsbK, PsbL, PsbM, PsbT, PsbX, PsbY, PsbZ, Psb30/Ycf12, at least 3 peripheral proteins of the oxygen-evolving complex and a large number of cofactors. It forms dimeric complexes. Binds multiple chlorophylls and provides some of the ligands for the Ca-4Mn-5O cluster of the oxygen-evolving complex. It may also provide a ligand for a Cl- that is required for oxygen evolution. PSII binds additional chlorophylls, carotenoids and specific lipids. is required as a cofactor.

It is found in the plastid. It localises to the chloroplast thylakoid membrane. Its function is as follows. One of the components of the core complex of photosystem II (PSII). It binds chlorophyll and helps catalyze the primary light-induced photochemical processes of PSII. PSII is a light-driven water:plastoquinone oxidoreductase, using light energy to abstract electrons from H(2)O, generating O(2) and a proton gradient subsequently used for ATP formation. The polypeptide is Photosystem II CP43 reaction center protein (Guillardia theta (Cryptophyte)).